The chain runs to 517 residues: Meiosis-specific transcription factor mei4 (517 aa).

A DNA-binding region (fork-head) is located at residues 81–172; the sequence is KPPCSYATLI…QNFVSVRLHR (92 aa). The tract at residues 170-278 is disordered; sequence LHRSHSTDSN…PNAETQEDLP (109 aa). Residues 209 to 223 show a composition bias toward low complexity; the sequence is NSFNSSTSTSGSSSN. Polar residues predominate over residues 230–246; that stretch reads NDASQPSNQDSSLNSNI. Residues 254-270 show a composition bias toward low complexity; the sequence is SNVQSNSSSSENVPKPN.

It localises to the nucleus. Functions as a meiosis-specific transcription factor. Binds to the 5'-GTAAAYA-3' consensus sequence of the promoter of the spo6 gene. This chain is Meiosis-specific transcription factor mei4 (mei4), found in Schizosaccharomyces pombe (strain 972 / ATCC 24843) (Fission yeast).